Here is a 196-residue protein sequence, read N- to C-terminus: 3-dehydroquinate dehydratase (196 aa).

3-dehydroquinate contacts are provided by residues 23-25 and R45; that span reads ELR. H98 acts as the Proton donor/acceptor in catalysis. K122 (schiff-base intermediate with substrate) is an active-site residue. Residues R159 and Q182 each coordinate 3-dehydroquinate.

Belongs to the type-I 3-dehydroquinase family. Homodimer.

It catalyses the reaction 3-dehydroquinate = 3-dehydroshikimate + H2O. It participates in metabolic intermediate biosynthesis; chorismate biosynthesis; chorismate from D-erythrose 4-phosphate and phosphoenolpyruvate: step 3/7. Its function is as follows. Involved in the third step of the chorismate pathway, which leads to the biosynthesis of aromatic amino acids. Catalyzes the cis-dehydration of 3-dehydroquinate (DHQ) and introduces the first double bond of the aromatic ring to yield 3-dehydroshikimate. The polypeptide is 3-dehydroquinate dehydratase (Archaeoglobus fulgidus (strain ATCC 49558 / DSM 4304 / JCM 9628 / NBRC 100126 / VC-16)).